We begin with the raw amino-acid sequence, 1328 residues long: 5'-3' exoribonuclease 1 (1328 aa).

The tract at residues 1211 to 1328 (AGKNRKTNVS…VQPMGKLQIN (118 aa)) is disordered. The segment covering 1217-1231 (TNVSANNVSQGTDSR) has biased composition (polar residues). Residues 1275-1286 (HKSKSKFSKGNH) show a composition bias toward basic residues.

This sequence belongs to the 5'-3' exonuclease family. As to quaternary structure, monomer. The cofactor is Mg(2+).

The protein localises to the cytoplasm. It localises to the perinuclear region. Its subcellular location is the P-body. With respect to regulation, strand exchange activity is enhanced by fatty acid synthase (stimulatory factor P190/210). Functionally, multifunctional protein that exhibits several independent functions at different levels of the cellular processes. 5'-3' exonuclease component of the nonsense-mediated mRNA decay (NMD) which is a highly conserved mRNA degradation pathway, an RNA surveillance system whose role is to identify and rid cells of mRNA with premature termination codons and thus prevents accumulation of potentially harmful truncated proteins. Involved in the degradation of several hypomodified mature tRNA species and participates in the 5'-processing or the degradation of the snoRNA precursors and rRNA processing. This is 5'-3' exoribonuclease 1 (exo2) from Schizosaccharomyces pombe (strain 972 / ATCC 24843) (Fission yeast).